Reading from the N-terminus, the 275-residue chain is Lincomycin biosynthesis protein LmbN (275 aa).

Residues 1-78 (MSTLDEVLAL…AIAATVARIT (78 aa)) form the Carrier domain. The residue at position 37 (serine 37) is an O-(pantetheine 4'-phosphoryl)serine. Residues 113–275 (LFDTWHAGGT…HHALCVAHAP (163 aa)) form the SIS domain.

It functions in the pathway antibiotic biosynthesis; lincomycin biosynthesis. In Streptomyces lincolnensis, this protein is Lincomycin biosynthesis protein LmbN (lmbN).